A 151-amino-acid chain; its full sequence is Regulatory protein RecX (151 aa).

The protein belongs to the RecX family.

The protein resides in the cytoplasm. Its function is as follows. Modulates RecA activity. This chain is Regulatory protein RecX, found in Haemophilus ducreyi (strain 35000HP / ATCC 700724).